The sequence spans 601 residues: Regulatory protein BlaR1 (601 aa).

Topologically, residues 1–8 are extracellular; sequence MSSSFFIP. A helical membrane pass occupies residues 9–26; sequence FLVSQILLSLFFSIIILI. At 27–35 the chain is on the cytoplasmic side; it reads KKLLRTQIT. A helical transmembrane segment spans residues 36 to 52; it reads VGTHYYISVISLLALIA. Residues 53–115 lie on the Extracellular side of the membrane; that stretch reads PFIPFHFLKS…EQSSSKMIDS (63 aa). Residues 116–133 traverse the membrane as a helical segment; that stretch reads AFFAVWILGVAVMLLATL. At 134 to 322 the chain is on the cytoplasmic side; that stretch reads YSNLKIGKIK…QTASPLLKAK (189 aa). The helical transmembrane segment at 323-339 threads the bilayer; the sequence is SALVFTLVLGAILAGTP. The Extracellular portion of the chain corresponds to 340–601; sequence SVSILAMQKE…KKGIYPSVSR (262 aa). The beta-lactam antibiotic sensor domain stretch occupies residues 354–601; it reads PGTNVEYEDY…KKGIYPSVSR (248 aa). Residue serine 402 is the Acyl-ester intermediate of the active site. Lysine 405 carries the post-translational modification N6-carboxylysine.

It belongs to the peptidase M56 family. Carboxylation occurs on two lysine residues. Carboxylation at 'Lys-405' activates the active site serine residue for acylation. On acylation, the lysine side chain experiences a spontaneous decarboxylation that entraps the sensor in its activated state.

It is found in the cell membrane. Integral membrane protein involved in sensing of the presence of beta-lactam antibiotics and transduction of the information to the cytoplasm. Mechanistically, activation of the signal transducer involves acylation of a serine in the C-terminal sensor domain upon binding of the beta-lactam antibiotic. In turn, a conformational change occurs and the signal is transmitted from the cell surface to the cytoplasm. There, the zinc protease domain is activated and initiates autoproteolysis as well as cleavage of the transcriptional repressor BlaI leading to derepression of antibiotic resistance genes. The sequence is that of Regulatory protein BlaR1 (blaR1) from Bacillus licheniformis.